A 1755-amino-acid chain; its full sequence is Transposon Ty1-BL Gag-Pol polyprotein (1755 aa).

Composition is skewed to polar residues over residues 20–31, 46–55, and 137–168; these read SVTSKEVQTTQD, VSTQANSQQP, and VGTHLNTPSPESGNSFPDSSSAKSNMTSTNQH. 3 disordered regions span residues 20-84, 137-173, and 350-420; these read SVTS…QNGP, VGTHLNTPSPESGNSFPDSSSAKSNMTSTNQHVRPPP, and QQES…IRGS. Positions 299–401 are RNA-binding; sequence NNGIPINNKV…NSQSRTARAH (103 aa). Residues 363-372 are compositionally biased toward basic and acidic residues; sequence SPSDEKKDSR. The segment covering 373–411 has biased composition (polar residues); that stretch reads TYTNTTKPKSITRNSQKPNNSQSRTARAHNVSTFNNSPG. Aspartate 461 functions as the For protease activity; shared with dimeric partner in the catalytic mechanism. The interval 583-640 is integrase-type zinc finger-like; sequence NVHTSESTRKYPYPFIHRMLAHANAQTIRYSLKNNTITYFNESDVDWSSAIDYQCPDC. Residues 660–835 form the Integrase catalytic domain; sequence NSYEPFQYLH…AGLDISTLLP (176 aa). Mg(2+) contacts are provided by aspartate 671 and aspartate 736. The tract at residues 956-1172 is disordered; that stretch reads SKAVSPTDST…LGGIGDSNAY (217 aa). Residues 960–969 are compositionally biased toward low complexity; it reads SPTDSTPPST. 2 stretches are compositionally biased toward polar residues: residues 1005–1017 and 1031–1043; these read STPQISDIESTDS and MSQSNTHESSYAS. A compositionally biased stretch (basic and acidic residues) spans 1044–1053; that stretch reads KSKDFRHSDS. 2 stretches are compositionally biased toward polar residues: residues 1054–1082 and 1095–1106; these read YSDNETNHTNVPISSTGGTNNKTVPQTSE and SIDTSSSESNSL. Residues 1178–1212 carry the Bipartite nuclear localization signal motif; the sequence is KKRSLEDNETEIKVSRDTWNTKNMRSLEPPRSKKR. One can recognise a Reverse transcriptase Ty1/copia-type domain in the interval 1338 to 1476; sequence NNYHITQLDI…DILGLEIKYQ (139 aa). The Mg(2+) site is built by aspartate 1346, aspartate 1427, aspartate 1428, aspartate 1610, glutamate 1652, and aspartate 1685. The 143-residue stretch at 1610-1752 folds into the RNase H Ty1/copia-type domain; sequence DASYGNQPYY…IKTFKLLTNK (143 aa).

In terms of assembly, the capsid protein forms a homotrimer, from which the VLPs are assembled. The protease is a homodimer, whose active site consists of two apposed aspartic acid residues. Post-translationally, initially, virus-like particles (VLPs) are composed of the structural unprocessed proteins Gag and Gag-Pol, and also contain the host initiator methionine tRNA (tRNA(i)-Met) which serves as a primer for minus-strand DNA synthesis, and a dimer of genomic Ty RNA. Processing of the polyproteins occurs within the particle and proceeds by an ordered pathway, called maturation. First, the protease (PR) is released by autocatalytic cleavage of the Gag-Pol polyprotein yielding capsid protein p45 and a Pol-p154 precursor protein. This cleavage is a prerequisite for subsequent processing of Pol-p154 at the remaining sites to release the mature structural and catalytic proteins. Maturation takes place prior to the RT reaction and is required to produce transposition-competent VLPs.

Its subcellular location is the cytoplasm. It localises to the nucleus. The catalysed reaction is DNA(n) + a 2'-deoxyribonucleoside 5'-triphosphate = DNA(n+1) + diphosphate. It carries out the reaction Endonucleolytic cleavage to 5'-phosphomonoester.. Functionally, capsid protein (CA) is the structural component of the virus-like particle (VLP), forming the shell that encapsulates the retrotransposons dimeric RNA genome. The particles are assembled from trimer-clustered units and there are holes in the capsid shells that allow for the diffusion of macromolecules. CA also has nucleocapsid-like chaperone activity, promoting primer tRNA(i)-Met annealing to the multipartite primer-binding site (PBS), dimerization of Ty1 RNA and initiation of reverse transcription. In terms of biological role, the aspartyl protease (PR) mediates the proteolytic cleavages of the Gag and Gag-Pol polyproteins after assembly of the VLP. Reverse transcriptase/ribonuclease H (RT) is a multifunctional enzyme that catalyzes the conversion of the retro-elements RNA genome into dsDNA within the VLP. The enzyme displays a DNA polymerase activity that can copy either DNA or RNA templates, and a ribonuclease H (RNase H) activity that cleaves the RNA strand of RNA-DNA heteroduplexes during plus-strand synthesis and hydrolyzes RNA primers. The conversion leads to a linear dsDNA copy of the retrotransposon that includes long terminal repeats (LTRs) at both ends. Its function is as follows. Integrase (IN) targets the VLP to the nucleus, where a subparticle preintegration complex (PIC) containing at least integrase and the newly synthesized dsDNA copy of the retrotransposon must transit the nuclear membrane. Once in the nucleus, integrase performs the integration of the dsDNA into the host genome. In Saccharomyces cerevisiae (strain ATCC 204508 / S288c) (Baker's yeast), this protein is Transposon Ty1-BL Gag-Pol polyprotein (TY1B-BL).